The sequence spans 348 residues: Phenylalanine--tRNA ligase alpha subunit (348 aa).

Position 262 (glutamate 262) interacts with Mg(2+).

It belongs to the class-II aminoacyl-tRNA synthetase family. Phe-tRNA synthetase alpha subunit type 1 subfamily. As to quaternary structure, tetramer of two alpha and two beta subunits. It depends on Mg(2+) as a cofactor.

It is found in the cytoplasm. The enzyme catalyses tRNA(Phe) + L-phenylalanine + ATP = L-phenylalanyl-tRNA(Phe) + AMP + diphosphate + H(+). The chain is Phenylalanine--tRNA ligase alpha subunit from Streptococcus pneumoniae serotype 2 (strain D39 / NCTC 7466).